The primary structure comprises 321 residues: Cytochrome f (321 aa).

Positions 1-35 (MQNRNKNNWMKKWVIRSISILIILNIIAWPSISYA) are cleaved as a signal peptide. Heme is bound by residues Tyr-36, Cys-56, Cys-59, and His-60. The chain crosses the membrane as a helical span at residues 287–306 (IQGLLLFFVSVIMAQILLVL).

Belongs to the cytochrome f family. As to quaternary structure, the 4 large subunits of the cytochrome b6-f complex are cytochrome b6, subunit IV (17 kDa polypeptide, petD), cytochrome f and the Rieske protein, while the 4 small subunits are PetG, PetL, PetM and PetN. The complex functions as a dimer. It depends on heme as a cofactor.

The protein localises to the plastid. It localises to the chloroplast thylakoid membrane. Functionally, component of the cytochrome b6-f complex, which mediates electron transfer between photosystem II (PSII) and photosystem I (PSI), cyclic electron flow around PSI, and state transitions. The sequence is that of Cytochrome f from Psilotum nudum (Whisk fern).